The following is a 195-amino-acid chain: Dual-action ribosomal maturation protein DarP (195 aa).

The protein belongs to the DarP family.

The protein localises to the cytoplasm. Member of a network of 50S ribosomal subunit biogenesis factors which assembles along the 30S-50S interface, preventing incorrect 23S rRNA structures from forming. Promotes peptidyl transferase center (PTC) maturation. In Stenotrophomonas maltophilia (strain K279a), this protein is Dual-action ribosomal maturation protein DarP.